A 251-amino-acid polypeptide reads, in one-letter code: Flagellar L-ring protein (251 aa).

The first 17 residues, 1–17, serve as a signal peptide directing secretion; sequence MIRKLAALIVAAAALQA. A lipid anchor (N-palmitoyl cysteine) is attached at Cys18. Cys18 carries the S-diacylglycerol cysteine lipid modification.

It belongs to the FlgH family. The basal body constitutes a major portion of the flagellar organelle and consists of four rings (L,P,S, and M) mounted on a central rod.

It is found in the cell outer membrane. It localises to the bacterial flagellum basal body. Functionally, assembles around the rod to form the L-ring and probably protects the motor/basal body from shearing forces during rotation. In Maricaulis maris (strain MCS10) (Caulobacter maris), this protein is Flagellar L-ring protein.